Reading from the N-terminus, the 513-residue chain is ATP synthase subunit alpha (513 aa).

169–176 (GDRQTGKT) is a binding site for ATP.

It belongs to the ATPase alpha/beta chains family. In terms of assembly, F-type ATPases have 2 components, CF(1) - the catalytic core - and CF(0) - the membrane proton channel. CF(1) has five subunits: alpha(3), beta(3), gamma(1), delta(1), epsilon(1). CF(0) has three main subunits: a(1), b(2) and c(9-12). The alpha and beta chains form an alternating ring which encloses part of the gamma chain. CF(1) is attached to CF(0) by a central stalk formed by the gamma and epsilon chains, while a peripheral stalk is formed by the delta and b chains.

It localises to the cell inner membrane. It catalyses the reaction ATP + H2O + 4 H(+)(in) = ADP + phosphate + 5 H(+)(out). In terms of biological role, produces ATP from ADP in the presence of a proton gradient across the membrane. The alpha chain is a regulatory subunit. This Methylobacillus flagellatus (strain ATCC 51484 / DSM 6875 / VKM B-1610 / KT) protein is ATP synthase subunit alpha.